Consider the following 241-residue polypeptide: Lipopolysaccharide export system ATP-binding protein LptB (241 aa).

Residues 4–237 (LTAKNLAKAY…EHVKRVYLGE (234 aa)) enclose the ABC transporter domain. Residue 36 to 43 (GPNGAGKT) coordinates ATP.

It belongs to the ABC transporter superfamily. Outer membrane lipopolysaccharide export (TC 1.B.42) family. Component of the lipopolysaccharide transport and assembly complex. The LptBFG transporter is composed of two ATP-binding proteins (LptB) and two transmembrane proteins (LptF and LptG).

It is found in the cytoplasm. Its subcellular location is the cell inner membrane. In terms of biological role, part of the ABC transporter complex LptBFG involved in the translocation of lipopolysaccharide (LPS) from the inner membrane to the outer membrane. Probably responsible for energy coupling to the transport system. This is Lipopolysaccharide export system ATP-binding protein LptB (lptB) from Escherichia coli O157:H7.